We begin with the raw amino-acid sequence, 448 residues long: Solute carrier family 52, riboflavin transporter, member 3-A (448 aa).

Transmembrane regions (helical) follow at residues 11–31 (AFGLGSWVSINGLWVELPLIV), 40–60 (LPSYLTVIIQFANLGPLLVTL), and 73–93 (LAIYAVLSIGVVACILLAVFW). Asn-94 carries N-linked (GlcNAc...) asparagine glycosylation. Transmembrane regions (helical) follow at residues 107–127 (AFFILTFFLALVDCTSSVTFL) and 138–158 (ITTYFIGEGLSGLVPGLVALA). N-linked (GlcNAc...) asparagine glycans are attached at residues Asn-168, Asn-171, Asn-175, and Asn-194. The next 6 membrane-spanning stretches (helical) occupy residues 198-218 (EIFFSFLAVMTTISLGAFLIL), 280-300 (AFIYVMVLWVNSATNGLLPSV), 315-335 (LSAALSAVANPVACIIAMFFP), 339-359 (LVFLGILCLLGSTFGGYNMAM), 376-396 (AIIVLSWVFFTGLLSYVKVMV), and 407-427 (ALVWCGAAVQTGSLLGSIIMF).

This sequence belongs to the riboflavin transporter family.

Its subcellular location is the cell membrane. It catalyses the reaction riboflavin(in) = riboflavin(out). Plasma membrane transporter mediating the uptake by cells of the water soluble vitamin B2/riboflavin that plays a key role in biochemical oxidation-reduction reactions of the carbohydrate, lipid, and amino acid metabolism. The chain is Solute carrier family 52, riboflavin transporter, member 3-A (slc52a3a) from Danio rerio (Zebrafish).